Consider the following 251-residue polypeptide: Hydroxyacylglutathione hydrolase (251 aa).

Zn(2+)-binding residues include H53, H55, D57, H58, H110, D127, and H165.

The protein belongs to the metallo-beta-lactamase superfamily. Glyoxalase II family. In terms of assembly, monomer. It depends on Zn(2+) as a cofactor.

It catalyses the reaction an S-(2-hydroxyacyl)glutathione + H2O = a 2-hydroxy carboxylate + glutathione + H(+). Its pathway is secondary metabolite metabolism; methylglyoxal degradation; (R)-lactate from methylglyoxal: step 2/2. Functionally, thiolesterase that catalyzes the hydrolysis of S-D-lactoyl-glutathione to form glutathione and D-lactic acid. The protein is Hydroxyacylglutathione hydrolase of Enterobacter sp. (strain 638).